The chain runs to 103 residues: Small ribosomal subunit protein uS10 (103 aa).

The protein belongs to the universal ribosomal protein uS10 family. In terms of assembly, part of the 30S ribosomal subunit.

Involved in the binding of tRNA to the ribosomes. In Azotobacter vinelandii (strain DJ / ATCC BAA-1303), this protein is Small ribosomal subunit protein uS10.